We begin with the raw amino-acid sequence, 386 residues long: D-amino-acid oxidase (386 aa).

The FAD site is built by G14, G15, V16, V17, E39, R40, A51, G52, and G53. Positions 109-138 are disordered; sequence SSSPPHPLLPPWVDPSASAAPPRELGTPDT. Positions 112–121 are enriched in pro residues; sequence PPHPLLPPWV. 3 residues coordinate FAD: R174, V175, and A176. 3 residues coordinate D-serine: Y253, Y261, and K332. Y261 and K332 together coordinate D-proline. Positions 332, 344, 345, 362, and 364 each coordinate FAD. Position 332 (K332) interacts with D-dopa. Residue G362 coordinates D-serine. G362 serves as a coordination point for D-proline. Residue G362 coordinates D-dopa.

Belongs to the DAMOX/DASOX family.

It catalyses the reaction a D-alpha-amino acid + O2 + H2O = a 2-oxocarboxylate + H2O2 + NH4(+). The enzyme catalyses D-alanine + O2 + H2O = pyruvate + H2O2 + NH4(+). It carries out the reaction D-aspartate + O2 + H2O = oxaloacetate + H2O2 + NH4(+). In terms of biological role, catalyzes the oxidative deamination of D-amino acids with broad substrate specificity. Enables the organism to utilize D-amino acids as a source of nutrients. The polypeptide is D-amino-acid oxidase (Zea mays (Maize)).